Consider the following 287-residue polypeptide: ATP synthase gamma chain (287 aa).

The protein belongs to the ATPase gamma chain family. In terms of assembly, F-type ATPases have 2 components, CF(1) - the catalytic core - and CF(0) - the membrane proton channel. CF(1) has five subunits: alpha(3), beta(3), gamma(1), delta(1), epsilon(1). CF(0) has three main subunits: a, b and c.

The protein localises to the cell inner membrane. Its function is as follows. Produces ATP from ADP in the presence of a proton gradient across the membrane. The gamma chain is believed to be important in regulating ATPase activity and the flow of protons through the CF(0) complex. This chain is ATP synthase gamma chain, found in Xylella fastidiosa (strain 9a5c).